A 188-amino-acid chain; its full sequence is Ribosomal RNA small subunit methyltransferase G (188 aa).

Residues glycine 69, phenylalanine 74, 119 to 120, and arginine 134 each bind S-adenosyl-L-methionine; that span reads VQ.

This sequence belongs to the methyltransferase superfamily. RNA methyltransferase RsmG family.

It localises to the cytoplasm. It catalyses the reaction guanosine(527) in 16S rRNA + S-adenosyl-L-methionine = N(7)-methylguanosine(527) in 16S rRNA + S-adenosyl-L-homocysteine. Functionally, specifically methylates the N7 position of guanine in position 527 of 16S rRNA. This Campylobacter jejuni subsp. jejuni serotype O:2 (strain ATCC 700819 / NCTC 11168) protein is Ribosomal RNA small subunit methyltransferase G.